We begin with the raw amino-acid sequence, 390 residues long: Phosphopentomutase (390 aa).

Positions 11, 283, 288, 324, 325, and 336 each coordinate Mn(2+).

The protein belongs to the phosphopentomutase family. It depends on Mn(2+) as a cofactor.

It is found in the cytoplasm. The enzyme catalyses 2-deoxy-alpha-D-ribose 1-phosphate = 2-deoxy-D-ribose 5-phosphate. The catalysed reaction is alpha-D-ribose 1-phosphate = D-ribose 5-phosphate. Its pathway is carbohydrate degradation; 2-deoxy-D-ribose 1-phosphate degradation; D-glyceraldehyde 3-phosphate and acetaldehyde from 2-deoxy-alpha-D-ribose 1-phosphate: step 1/2. Functionally, isomerase that catalyzes the conversion of deoxy-ribose 1-phosphate (dRib-1-P) and ribose 1-phosphate (Rib-1-P) to deoxy-ribose 5-phosphate (dRib-5-P) and ribose 5-phosphate (Rib-5-P), respectively. This chain is Phosphopentomutase, found in Alkaliphilus oremlandii (strain OhILAs) (Clostridium oremlandii (strain OhILAs)).